Reading from the N-terminus, the 96-residue chain is Glutamyl-tRNA(Gln) amidotransferase subunit C (96 aa).

Belongs to the GatC family. Heterotrimer of A, B and C subunits.

It carries out the reaction L-glutamyl-tRNA(Gln) + L-glutamine + ATP + H2O = L-glutaminyl-tRNA(Gln) + L-glutamate + ADP + phosphate + H(+). The enzyme catalyses L-aspartyl-tRNA(Asn) + L-glutamine + ATP + H2O = L-asparaginyl-tRNA(Asn) + L-glutamate + ADP + phosphate + 2 H(+). Allows the formation of correctly charged Asn-tRNA(Asn) or Gln-tRNA(Gln) through the transamidation of misacylated Asp-tRNA(Asn) or Glu-tRNA(Gln) in organisms which lack either or both of asparaginyl-tRNA or glutaminyl-tRNA synthetases. The reaction takes place in the presence of glutamine and ATP through an activated phospho-Asp-tRNA(Asn) or phospho-Glu-tRNA(Gln). The protein is Glutamyl-tRNA(Gln) amidotransferase subunit C of Halalkalibacterium halodurans (strain ATCC BAA-125 / DSM 18197 / FERM 7344 / JCM 9153 / C-125) (Bacillus halodurans).